The sequence spans 434 residues: 3-phosphoshikimate 1-carboxyvinyltransferase (434 aa).

Residues K22, S23, and R27 each coordinate 3-phosphoshikimate. K22 contacts phosphoenolpyruvate. The phosphoenolpyruvate site is built by G93 and R121. 3-phosphoshikimate-binding residues include S168, S169, Q170, S199, D320, and K347. Q170 serves as a coordination point for phosphoenolpyruvate. Catalysis depends on D320, which acts as the Proton acceptor. Positions 351, 394, and 419 each coordinate phosphoenolpyruvate.

The protein belongs to the EPSP synthase family. In terms of assembly, monomer.

It localises to the cytoplasm. The catalysed reaction is 3-phosphoshikimate + phosphoenolpyruvate = 5-O-(1-carboxyvinyl)-3-phosphoshikimate + phosphate. Its pathway is metabolic intermediate biosynthesis; chorismate biosynthesis; chorismate from D-erythrose 4-phosphate and phosphoenolpyruvate: step 6/7. Its function is as follows. Catalyzes the transfer of the enolpyruvyl moiety of phosphoenolpyruvate (PEP) to the 5-hydroxyl of shikimate-3-phosphate (S3P) to produce enolpyruvyl shikimate-3-phosphate and inorganic phosphate. This Burkholderia orbicola (strain AU 1054) protein is 3-phosphoshikimate 1-carboxyvinyltransferase.